Here is a 377-residue protein sequence, read N- to C-terminus: Adenosine 3'-phospho 5'-phosphosulfate transporter 2 (377 aa).

The next 10 helical transmembrane spans lie at 50 to 70 (LCCGGVFALYLVYGYMQELIF), 77 to 97 (PYGWYLTLVQFAYYTAFGYIE), 115 to 135 (ALLAFLTLGTMGLSNSSVGYL), 138 to 158 (PTQVIFKCCKLIPVLIGSVLI), 164 to 184 (GPMDFFAATAMCLGLILFTLA), 195 to 215 (FGVFLISLALLCDAAIGNVQE), 228 to 248 (VVIYSYGIGFVYLAVIMLLSG), 266 to 286 (GYAFLFSLTGYLGIQIVLTLV), 293 to 313 (LAATVTTARKAVTIALSFVFF), and 317 to 337 (FTIQYLWSGLIVVFGIYLNVY).

The protein belongs to the nucleotide-sugar transporter family. SLC35B subfamily.

The protein resides in the golgi apparatus membrane. Its function is as follows. Mediates the transport of adenosine 3'-phospho 5'-phosphosulfate (PAPS), from cytosol into Golgi. PAPS is a universal sulfuryl donor for sulfation events that take place in the Golgi. Essential for viability. Involved in glycosaminoglycan synthesis and the subsequent signaling. May be involved in hh and dpp signaling by controlling the sulfation of heparan sulfate (HS). In Anopheles gambiae (African malaria mosquito), this protein is Adenosine 3'-phospho 5'-phosphosulfate transporter 2.